Reading from the N-terminus, the 381-residue chain is MIISASTDYRAAAQRKLPPFLFHYADGGAYAEHTLRHNVSDLASIALRQRVLNNMSELSLSTRLFDETLSMPVALAPVGLTGMYARRGEVQAARAAAAHGIPFTMSTVSVCPIEEVAPAIDRPMWFQLYVLKDRGFMRNALERAKAAGVKTLVFTVDMPVPGARYRDAHSGMSGKNGPLRRVLQAMTHPEWAWDVGVMGRPHDLGNISKYRGNPTGLADYIGWLGNNFDPSISWKDLEWIREYWDGPMIIKGILDADDARDAVKFGADGIVVSNHGGRQLDGVLSSARALPAIADAVKGDLKILADSGIRSGLDVVRMIALGADTVLIGRAFLYALAVHGQAGVKNLLELFEKEMRVAMVLTGAKSISEITRDSLVRELGA.

Positions 1-380 (MIISASTDYR…TRDSLVRELG (380 aa)) constitute an FMN hydroxy acid dehydrogenase domain. Position 24 (tyrosine 24) interacts with substrate. Residues serine 106 and glutamine 127 each contribute to the FMN site. Tyrosine 129 contributes to the substrate binding site. Residue threonine 155 participates in FMN binding. A substrate-binding site is contributed by arginine 164. Lysine 251 contributes to the FMN binding site. The active-site Proton acceptor is the histidine 275. Residue arginine 278 coordinates substrate. Position 306 to 330 (306 to 330 (DSGIRSGLDVVRMIALGADTVLIGR)) interacts with FMN.

The protein belongs to the FMN-dependent alpha-hydroxy acid dehydrogenase family. In terms of assembly, homotetramer. FMN serves as cofactor.

Its subcellular location is the cell inner membrane. The enzyme catalyses (S)-lactate + A = pyruvate + AH2. In terms of biological role, catalyzes the conversion of L-lactate to pyruvate. Is coupled to the respiratory chain. The sequence is that of L-lactate dehydrogenase from Pseudomonas putida (strain GB-1).